Reading from the N-terminus, the 307-residue chain is Putative S-adenosyl-L-methionine-dependent methyltransferase Mflv_5023 (307 aa).

S-adenosyl-L-methionine contacts are provided by residues D133 and 162–163; that span reads DL. Positions 213–234 are disordered; sequence SRLAVESVPSQQSADQDEMREK.

This sequence belongs to the UPF0677 family.

In terms of biological role, exhibits S-adenosyl-L-methionine-dependent methyltransferase activity. This chain is Putative S-adenosyl-L-methionine-dependent methyltransferase Mflv_5023, found in Mycolicibacterium gilvum (strain PYR-GCK) (Mycobacterium gilvum (strain PYR-GCK)).